Reading from the N-terminus, the 89-residue chain is Small ribosomal subunit protein uS15 (89 aa).

Belongs to the universal ribosomal protein uS15 family. Part of the 30S ribosomal subunit. Forms a bridge to the 50S subunit in the 70S ribosome, contacting the 23S rRNA.

Functionally, one of the primary rRNA binding proteins, it binds directly to 16S rRNA where it helps nucleate assembly of the platform of the 30S subunit by binding and bridging several RNA helices of the 16S rRNA. In terms of biological role, forms an intersubunit bridge (bridge B4) with the 23S rRNA of the 50S subunit in the ribosome. This chain is Small ribosomal subunit protein uS15, found in Thiobacillus denitrificans (strain ATCC 25259 / T1).